Reading from the N-terminus, the 387-residue chain is S-adenosylmethionine synthase (387 aa).

His19 contacts ATP. Asp21 is a Mg(2+) binding site. K(+) is bound at residue Glu47. L-methionine is bound at residue Gln103. A flexible loop region spans residues 103-113 (QSPDIAQGVEL). Residues 167-169 (DMK), 233-234 (RF), Asp242, 248-249 (RK), Ala265, and Lys269 each bind ATP. Asp242 provides a ligand contact to L-methionine. Lys273 lines the L-methionine pocket.

The protein belongs to the AdoMet synthase family. Homotetramer; dimer of dimers. Requires Mg(2+) as cofactor. K(+) is required as a cofactor.

The protein resides in the cytoplasm. The enzyme catalyses L-methionine + ATP + H2O = S-adenosyl-L-methionine + phosphate + diphosphate. It participates in amino-acid biosynthesis; S-adenosyl-L-methionine biosynthesis; S-adenosyl-L-methionine from L-methionine: step 1/1. Catalyzes the formation of S-adenosylmethionine (AdoMet) from methionine and ATP. The overall synthetic reaction is composed of two sequential steps, AdoMet formation and the subsequent tripolyphosphate hydrolysis which occurs prior to release of AdoMet from the enzyme. The polypeptide is S-adenosylmethionine synthase (Mycoplasma capricolum subsp. capricolum (strain California kid / ATCC 27343 / NCTC 10154)).